The following is a 346-amino-acid chain: Dihydroorotate dehydrogenase (quinone) (346 aa).

Residues 62–66 (AGMDK) and T86 each bind FMN. A substrate-binding site is contributed by K66. A substrate-binding site is contributed by 111 to 115 (NRMGF). FMN is bound by residues N142 and N175. N175 contributes to the substrate binding site. Catalysis depends on S178, which acts as the Nucleophile. N180 provides a ligand contact to substrate. FMN is bound by residues K211 and V239. 240–241 (NT) is a substrate binding site. Residues G261, G289, and 310–311 (YT) each bind FMN.

Belongs to the dihydroorotate dehydrogenase family. Type 2 subfamily. As to quaternary structure, monomer. Requires FMN as cofactor.

It is found in the cell membrane. The catalysed reaction is (S)-dihydroorotate + a quinone = orotate + a quinol. The protein operates within pyrimidine metabolism; UMP biosynthesis via de novo pathway; orotate from (S)-dihydroorotate (quinone route): step 1/1. Its function is as follows. Catalyzes the conversion of dihydroorotate to orotate with quinone as electron acceptor. This Thermus thermophilus (strain ATCC 27634 / DSM 579 / HB8) protein is Dihydroorotate dehydrogenase (quinone).